The following is a 569-amino-acid chain: Amyloid-beta A4 precursor protein-binding family A member 3 (569 aa).

M1 carries the post-translational modification N-acetylmethionine. Disordered regions lie at residues 1-53 (MEFL…MELD) and 124-168 (AQSV…SSPE). Residues 19-32 (EEPKGPEVPSEDHP) are compositionally biased toward basic and acidic residues. Residues 132 to 141 (AQAAPRLLQP) show a composition bias toward low complexity. S166 and S367 each carry phosphoserine. Positions 212-376 (DGVLFGAKYL…SASASHPHNG (165 aa)) constitute a PID domain. PDZ domains lie at 389–475 (EVCI…IIHC) and 480–554 (TAVI…TMPA).

In terms of assembly, binds to the cytoplasmic domain of amyloid protein (APP). Interacts with HIF1AN (via N-terminus). Interacts with NECAB3; seems to mediate the interaction between NECAB3 and HIF1AN. Ubiquitous.

The protein resides in the cytoplasm. The protein localises to the perinuclear region. In terms of biological role, may modulate processing of the amyloid-beta precursor protein (APP) and hence formation of APP-beta. May enhance the activity of HIF1A in macrophages by inhibiting the activity of HIF1AN. In Rattus norvegicus (Rat), this protein is Amyloid-beta A4 precursor protein-binding family A member 3 (Apba3).